The sequence spans 620 residues: Chaperone protein DnaK (620 aa).

Threonine 174 carries the phosphothreonine; by autocatalysis modification. The interval 590 to 620 (AAGAGPDMSGAGPQGDTYAGDDVVDGDYREV) is disordered.

Belongs to the heat shock protein 70 family.

Acts as a chaperone. The protein is Chaperone protein DnaK of Lachnoclostridium phytofermentans (strain ATCC 700394 / DSM 18823 / ISDg) (Clostridium phytofermentans).